Consider the following 248-residue polypeptide: tRNA uridine(34) hydroxylase (248 aa).

Positions 128 to 222 constitute a Rhodanese domain; that stretch reads EGRPVVMLDT…YFEEVGGAHY (95 aa). The active-site Cysteine persulfide intermediate is the Cys-182.

This sequence belongs to the TrhO family.

It catalyses the reaction uridine(34) in tRNA + AH2 + O2 = 5-hydroxyuridine(34) in tRNA + A + H2O. Catalyzes oxygen-dependent 5-hydroxyuridine (ho5U) modification at position 34 in tRNAs. This chain is tRNA uridine(34) hydroxylase, found in Thiobacillus denitrificans (strain ATCC 25259 / T1).